A 268-amino-acid polypeptide reads, in one-letter code: Virulence plasmid ParA family protein pGP5-D (268 aa).

13 to 20 (FKGGTGKT) is an ATP binding site.

Belongs to the ParA family.

This chain is Virulence plasmid ParA family protein pGP5-D, found in Chlamydia muridarum (strain MoPn / Nigg).